The sequence spans 226 residues: Translation initiation factor IF-3 (226 aa).

The disordered stretch occupies residues Phe-195–Asn-226. Acidic residues predominate over residues Asp-205–Asn-226.

Belongs to the IF-3 family. Monomer.

The protein localises to the cytoplasm. Functionally, IF-3 binds to the 30S ribosomal subunit and shifts the equilibrium between 70S ribosomes and their 50S and 30S subunits in favor of the free subunits, thus enhancing the availability of 30S subunits on which protein synthesis initiation begins. In Chlorobium chlorochromatii (strain CaD3), this protein is Translation initiation factor IF-3.